The chain runs to 103 residues: Large ribosomal subunit protein bL21 (103 aa).

The protein belongs to the bacterial ribosomal protein bL21 family. In terms of assembly, part of the 50S ribosomal subunit. Contacts protein L20.

In terms of biological role, this protein binds to 23S rRNA in the presence of protein L20. The protein is Large ribosomal subunit protein bL21 of Legionella pneumophila (strain Lens).